The chain runs to 625 residues: MDFDSPEEKEFPGLYASEAADAKSRKSKEESDFSEDHDHSKKDLLIGRRKDKKEKGKDRGYAALEGESSPEEELDTKSPSKSKKSKTFKFTSSKSKEKREKSRDKSEKDSKHAEEEPSVSHKVKEKERDKEKDRDEPKKKDKEEKRKEKDKKADKKDKKDKKSKQLSQQQDDVSAAEEVLALGYPVFGVSVSLATERSRCHDGVDIPLVVRDCIDFLQDHLKCEQIYKIEPIKTRLMHFKRLYNNREHDSAVDELNLPTACSLLKLFLRELPEPLLTTDLVARFEEVASHPKVTTQQAELQQLLEQLPKCNRTLLAWVLLHFDAVIQQERHNKLNAQSLAMLLSPTLQMSHRLMVALLCHCNNLFADVQLIKYVPPLTSTSPKLPDTPEDIQTELRKQDSLLSQIHSEMNAGFITKKREEQLWEVQRIITQLKRKLRTFEKKQEKTAEEVDNSSSAPPAVASEDTTDSKPAGTPAVSTNNSISQEEPKTDTLTPKDAPNDFTIDPSTGFILLPKSNPHRENLLRLQIEYDELMEWQNELKARIVAERNEVYRLKQLYEQQSINSQMASLASGSQAPPESDYERIIEHYTRENALLEHKKNMLGMELKEERRACIALQVELRLQQF.

Basic and acidic residues-rich tracts occupy residues 1–11 (MDFDSPEEKEF) and 20–60 (ADAK…KDRG). Positions 1 to 172 (MDFDSPEEKE…SKQLSQQQDD (172 aa)) are disordered. 2 positions are modified to phosphoserine: serine 68 and serine 69. Over residues 94–157 (KSKEKREKSR…EKDKKADKKD (64 aa)) the composition is skewed to basic and acidic residues. A Rho-GAP domain is found at 191–385 (VSLATERSRC…PLTSTSPKLP (195 aa)). The disordered stretch occupies residues 443–500 (QEKTAEEVDNSSSAPPAVASEDTTDSKPAGTPAVSTNNSISQEEPKTDTLTPKDAPND). Residues 475–484 (AVSTNNSISQ) show a composition bias toward polar residues.

Interacts with CycB and numb.

Participates in receptor endocytosis during interphase, is also involved in mitotic processes when endocytosis is switched off. This is RalA-binding protein 1 from Drosophila melanogaster (Fruit fly).